A 70-amino-acid chain; its full sequence is MPIVRLKENEPFEAALRRFKRTIEKTGLLTELRSREFYEKPTAERKRKHAAAVKRHYKRIRSQQLPPRMY.

This sequence belongs to the bacterial ribosomal protein bS21 family.

This chain is Small ribosomal subunit protein bS21, found in Bordetella avium (strain 197N).